The chain runs to 393 residues: NAD(P)H-quinone oxidoreductase subunit H, chloroplastic (393 aa).

This sequence belongs to the complex I 49 kDa subunit family. In terms of assembly, NDH is composed of at least 16 different subunits, 5 of which are encoded in the nucleus.

It is found in the plastid. Its subcellular location is the chloroplast thylakoid membrane. It carries out the reaction a plastoquinone + NADH + (n+1) H(+)(in) = a plastoquinol + NAD(+) + n H(+)(out). It catalyses the reaction a plastoquinone + NADPH + (n+1) H(+)(in) = a plastoquinol + NADP(+) + n H(+)(out). NDH shuttles electrons from NAD(P)H:plastoquinone, via FMN and iron-sulfur (Fe-S) centers, to quinones in the photosynthetic chain and possibly in a chloroplast respiratory chain. The immediate electron acceptor for the enzyme in this species is believed to be plastoquinone. Couples the redox reaction to proton translocation, and thus conserves the redox energy in a proton gradient. This chain is NAD(P)H-quinone oxidoreductase subunit H, chloroplastic, found in Eucalyptus globulus subsp. globulus (Tasmanian blue gum).